The following is an 855-amino-acid chain: Zinc finger protein 814 (855 aa).

In terms of domain architecture, KRAB spans 15–91; the sequence is VTFEDVAVNF…PMAGVSPKKA (77 aa). The C2H2-type 1; degenerate zinc-finger motif lies at 120–142; it reads HRCEAWGNKLYDSGNFHQHQNEH. 22 consecutive C2H2-type zinc fingers follow at residues 242–264, 269–291, 296–318, 324–346, 352–374, 380–402, 408–430, 436–458, 464–486, 492–514, 520–542, 548–570, 576–598, 604–626, 632–654, 660–682, 688–710, 716–738, 744–766, 772–794, 800–822, and 828–850; these read YVCCECGKSFSKYASLSNHQRVH, HECGECGKSFSKYVSFSNHQRVH, YECGECGKSFSKYASFSNHQRVH, YECGECGKSFSKYVSFSNHQRVH, YECGECGKSFSQKSSLIQHQRFH, YGCEECGKSFSSEGHLRSHQRVH, FKCGECVKSFSHKRSLVHHQRVH, YQCGECGKSFSQKGNLVLHQRVH, YECGECGKSFSSKGHLRNHQQIH, YECGECGKSFSHKGTLILHQRVH, YGCGECGKSFSSIGHLRSHQRVH, YECGECGKSFSHKRSLVHHQRMH, YKCGDCGKSFNEKGHLRNHQRVH, FKCGECGKCFSHKGNLILHQHGH, YVCRECGKLFKKKSHLLVHQRIH, YACEACQKFFRNKYQLIAHQRVH, YECNDCGKSFTHSSTFCVHKRIH, YECSECGKSFAESSSFTKHKRVH, YECSECGKSFAESSSLTKHKRVH, and YKCEKCGKLFNKKSHLLVHQSSH. Lys335 participates in a covalent cross-link: Glycyl lysine isopeptide (Lys-Gly) (interchain with G-Cter in SUMO2). Residue Lys391 forms a Glycyl lysine isopeptide (Lys-Gly) (interchain with G-Cter in SUMO2) linkage.

The sequence is that of Zinc finger protein 814 (ZNF814) from Homo sapiens (Human).